Reading from the N-terminus, the 85-residue chain is Sec-independent protein translocase protein TatA (85 aa).

The chain crosses the membrane as a helical span at residues 7-27 (VFGSLGWTEILLILFIALLLF). The interval 50–85 (LTGESDDSSQQISQEQERSVPKEETKTSKSKKSKSA) is disordered. Positions 64–76 (EQERSVPKEETKT) are enriched in basic and acidic residues.

It belongs to the TatA/E family. In terms of assembly, forms a complex with TatC.

It localises to the cell inner membrane. Part of the twin-arginine translocation (Tat) system that transports large folded proteins containing a characteristic twin-arginine motif in their signal peptide across membranes. TatA could form the protein-conducting channel of the Tat system. The protein is Sec-independent protein translocase protein TatA of Leptospira interrogans serogroup Icterohaemorrhagiae serovar Lai (strain 56601).